A 339-amino-acid polypeptide reads, in one-letter code: UDP-glucose 4-epimerase (339 aa).

NAD(+) is bound by residues 12-13 (FI), 32-37 (DNLCNS), 59-60 (DI), 81-85 (FAGLK), Asn100, Ser125, Tyr150, Lys154, and Phe179. Ser125 and Tyr150 together coordinate substrate. Tyr150 functions as the Proton acceptor in the catalytic mechanism. Substrate contacts are provided by residues Asn180, 200 to 201 (NL), 217 to 219 (AVF), Arg232, and 293 to 296 (RAGD).

Belongs to the NAD(P)-dependent epimerase/dehydratase family. Homodimer. The cofactor is NAD(+).

It carries out the reaction UDP-alpha-D-glucose = UDP-alpha-D-galactose. Its pathway is carbohydrate metabolism; galactose metabolism. Functionally, involved in the metabolism of galactose. Plays an essential role in the incorporation of galactose into meningococcal lipopolysaccharide surface molecules, which are important for pathogenesis. Catalyzes the conversion of UDP-galactose (UDP-Gal) to UDP-glucose (UDP-Glc) through a mechanism involving the transient reduction of NAD. The sequence is that of UDP-glucose 4-epimerase (galE) from Neisseria meningitidis serogroup C.